A 257-amino-acid chain; its full sequence is uncharacterized protein (257 aa).

The chain crosses the membrane as a helical span at residues 6–26 (IFWLNLAAIIIISIVVSGGMF).

This sequence belongs to the staphylococcal tandem lipoprotein family.

The protein resides in the cell membrane. This is an uncharacterized protein from Staphylococcus aureus (strain N315).